The sequence spans 107 residues: Alpha-elapitoxin-Al2a (107 aa).

A signal peptide spans 1–21 (MKTLLLTLVVVTIVCLDLGDS). 5 disulfides stabilise this stretch: Cys-24-Cys-41, Cys-34-Cys-62, Cys-47-Cys-51, Cys-66-Cys-77, and Cys-78-Cys-83.

It belongs to the three-finger toxin family. Long-chain subfamily. Type II alpha-neurotoxin sub-subfamily. Expressed by the venom gland.

It is found in the secreted. In terms of biological role, binds with high affinity to muscular (alpha-1/CHRNA1) and neuronal (alpha-7/CHRNA7) nicotinic acetylcholine receptor (nAChR) and inhibits acetylcholine from binding to the receptor, thereby impairing neuromuscular and neuronal transmission. The protein is Alpha-elapitoxin-Al2a of Austrelaps labialis (Pygmy copperhead).